A 745-amino-acid chain; its full sequence is Serine/threonine-protein kinase BUR1 (745 aa).

The tract at residues 1–21 (MSVIAGHHVPRSNDQRQYDTP) is disordered. The region spanning 44–349 (YEVIEKLGQG…ALDALNHKFF (306 aa)) is the Protein kinase domain. Residues 50-58 (LGQGTFGVV) and Lys73 contribute to the ATP site. Asp179 (proton acceptor) is an active-site residue. Composition is skewed to basic and acidic residues over residues 380–406 (DKEQ…RYNA), 428–475 (DYID…DIQN), and 493–508 (KLRE…KKYD). Residues 380-701 (DKEQAVSELK…EVSDLEEDSD (322 aa)) form a disordered region. Over residues 516-534 (SRGSKSPSPSKLSSISQSK) the composition is skewed to low complexity. Residues 547–557 (ASRESSLERKQ) show a composition bias toward basic and acidic residues. Polar residues-rich tracts occupy residues 558 to 567 (VSNGIRTTTD) and 586 to 598 (LTSN…PTRN). The segment covering 599–631 (KSVERPKDLEKPTNGVTEDRNKKPVLEEKKEVV) has biased composition (basic and acidic residues). Residues 632–660 (KPNLAIPKIKKSSSLVSLSSRSSTTPVIS) are compositionally biased toward low complexity. The segment covering 661-674 (NPSKVTKRAASSVT) has biased composition (polar residues). Over residues 692 to 701 (EVSDLEEDSD) the composition is skewed to acidic residues.

It belongs to the protein kinase superfamily. CMGC Ser/Thr protein kinase family. CDC2/CDKX subfamily.

It localises to the nucleus. The catalysed reaction is L-seryl-[protein] + ATP = O-phospho-L-seryl-[protein] + ADP + H(+). It catalyses the reaction L-threonyl-[protein] + ATP = O-phospho-L-threonyl-[protein] + ADP + H(+). The enzyme catalyses [DNA-directed RNA polymerase] + ATP = phospho-[DNA-directed RNA polymerase] + ADP + H(+). Its function is as follows. Serine/threonine-protein kinase involved in transcription regulation. Phosphorylates the UBC2/RAD6 ubiquitin-conjugating enzyme (E2), leading to monoubiquitination of histone H2B and the silencing of telomeric-associated genes. Also required for histone H3 methylation. Necessary for the recovery from pheromone-induced growth arrest in the cell cycle G1 phase. Required for pseudohyphal growth and virulence in mice. The chain is Serine/threonine-protein kinase BUR1 (CRK1) from Candida albicans (strain SC5314 / ATCC MYA-2876) (Yeast).